We begin with the raw amino-acid sequence, 953 residues long: Homeobox protein LUMINIDEPENDENS (953 aa).

The segment at residues 63 to 123 (KIGKRPRDLL…VTQKTRVRKQ (61 aa)) is a DNA-binding region (homeobox). The tract at residues 404-430 (EQPGQKAAGKSPQTVRIGTSGRSRPMS) is disordered. Positions 414-425 (SPQTVRIGTSGR) are enriched in polar residues. 5 repeat units span residues 498 to 502 (QPVNG), 507 to 511 (QPVNG), 516 to 520 (QPVNG), 525 to 529 (QPVNG), and 534 to 538 (QPVNG). The 5 X 5 AA repeats of Q-P-V-N-G stretch occupies residues 498 to 538 (QPVNGFSTIQPVNGPSAVQPVNGPLAVQPVNGPSALQPVNG). Disordered stretches follow at residues 606–668 (NSKE…EPQD), 733–763 (APNS…NPGM), and 861–953 (VGQM…KRWR). Residues 608–623 (KEADVQRNRNRRERET) are compositionally biased toward basic and acidic residues. Over residues 651–661 (PEIPSQQPPEE) the composition is skewed to low complexity. Residues 733–742 (APNSSSSSNK) show a composition bias toward polar residues. Residues 869-884 (SSSWRSQQSQNSYYSH) are compositionally biased toward low complexity. Polar residues-rich tracts occupy residues 888-934 (EIAS…QQQA) and 942-953 (THPYWNQNKRWR).

In terms of assembly, interacts with SUF4. In terms of tissue distribution, expressed in shoot apex, root apex, leaf primordia and floral buds.

It is found in the nucleus. Its function is as follows. Seems to play a role in the regulation of flowering time in the autonomous flowering pathway by repressing FLOWERING LOCUS C expression. This Arabidopsis thaliana (Mouse-ear cress) protein is Homeobox protein LUMINIDEPENDENS (LD).